Consider the following 238-residue polypeptide: Ribonuclease 3 (238 aa).

One can recognise an RNase III domain in the interval 4-130 (IQTLFQTLNI…LFGAIYLDLG (127 aa)). Glu45 contributes to the Mg(2+) binding site. Residue Asp49 is part of the active site. Positions 116 and 119 each coordinate Mg(2+). The active site involves Glu119. The DRBM domain occupies 154–222 (DFKTQLQEIV…AQQALSKVAK (69 aa)). The interval 215 to 238 (QALSKVAKPKDLLNNKGGKEKELQ) is disordered. Positions 222–238 (KPKDLLNNKGGKEKELQ) are enriched in basic and acidic residues.

Belongs to the ribonuclease III family. As to quaternary structure, homodimer. The cofactor is Mg(2+).

Its subcellular location is the cytoplasm. It carries out the reaction Endonucleolytic cleavage to 5'-phosphomonoester.. Its function is as follows. Digests double-stranded RNA. Involved in the processing of primary rRNA transcript to yield the immediate precursors to the large and small rRNAs (23S and 16S). Processes some mRNAs, and tRNAs when they are encoded in the rRNA operon. Processes pre-crRNA and tracrRNA of type II CRISPR loci if present in the organism. In Onion yellows phytoplasma (strain OY-M), this protein is Ribonuclease 3.